The following is a 153-amino-acid chain: Insulin-like growth factor 1 (153 aa).

Residues 49–77 (GPETLCGAELVDALQFVCGDRGFYFSKPT) are b. Intrachain disulfides connect Cys-54/Cys-96, Cys-66/Cys-109, and Cys-95/Cys-100. A c region spans residues 78-89 (GYGSSSRRLHHK). Positions 90-110 (GIVDECCFQSCDLRRLEMYCA) are a. Positions 111 to 118 (PIKPPKSA) are d. A propeptide spans 119–153 (RSVRAQRHTDMPKAQKEVHLKNTSRGNTGNRNYRM) (e peptide). Residues 119–153 (RSVRAQRHTDMPKAQKEVHLKNTSRGNTGNRNYRM) form a disordered region. A compositionally biased stretch (basic and acidic residues) spans 125–138 (RHTDMPKAQKEVHL). The segment covering 139–153 (KNTSRGNTGNRNYRM) has biased composition (polar residues).

Belongs to the insulin family. In terms of assembly, forms a ternary complex with IGFR1 and ITGAV:ITGB3. Forms a ternary complex with IGFR1 and ITGA6:ITGB4. Forms a ternary complex with IGFBP3 and ALS.

The protein localises to the secreted. Its function is as follows. The insulin-like growth factors, isolated from plasma, are structurally and functionally related to insulin but have a much higher growth-promoting activity. Acts as a ligand for IGF1R. Binds to the alpha subunit of IGF1R, leading to the activation of the intrinsic tyrosine kinase activity which autophosphorylates tyrosine residues in the beta subunit thus initiatiating a cascade of down-stream signaling events leading to activation of the PI3K-AKT/PKB and the Ras-MAPK pathways. Binds to integrins. Its binding to integrins and subsequent ternary complex formation with integrins and IGFR1 are essential for IGF1 signaling. The sequence is that of Insulin-like growth factor 1 from Gallus gallus (Chicken).